The following is a 138-amino-acid chain: Thyrotropin subunit beta (138 aa).

The N-terminal stretch at 1-20 (MTAIFLMSMVFGLACGQTMS) is a signal peptide. 6 disulfide bridges follow: Cys22–Cys72, Cys36–Cys87, Cys39–Cys125, Cys47–Cys103, Cys51–Cys105, and Cys108–Cys115. N-linked (GlcNAc...) asparagine glycosylation occurs at Asn43. Positions 133–138 (VVEFSI) are excised as a propeptide.

This sequence belongs to the glycoprotein hormones subunit beta family. In terms of assembly, heterodimer of a common alpha chain and a unique beta chain which confers biological specificity to thyrotropin, lutropin, follitropin and gonadotropin.

The protein resides in the secreted. Indispensable for the control of thyroid structure and metabolism. The sequence is that of Thyrotropin subunit beta (TSHB) from Equus caballus (Horse).